The chain runs to 201 residues: Potassium-transporting ATPase KdpC subunit (201 aa).

The helical transmembrane segment at 7-27 (PAFVVLIALTALTGLAYPLAM) threads the bilayer.

The protein belongs to the KdpC family. As to quaternary structure, the system is composed of three essential subunits: KdpA, KdpB and KdpC.

The protein localises to the cell inner membrane. Functionally, part of the high-affinity ATP-driven potassium transport (or Kdp) system, which catalyzes the hydrolysis of ATP coupled with the electrogenic transport of potassium into the cytoplasm. This subunit acts as a catalytic chaperone that increases the ATP-binding affinity of the ATP-hydrolyzing subunit KdpB by the formation of a transient KdpB/KdpC/ATP ternary complex. In Xanthobacter autotrophicus (strain ATCC BAA-1158 / Py2), this protein is Potassium-transporting ATPase KdpC subunit.